The primary structure comprises 372 residues: Gibberellin 20 oxidase 1 (372 aa).

Residues 209–309 enclose the Fe2OG dioxygenase domain; that stretch reads RNDSIMRLNY…RRSLAFFLCP (101 aa). Positions 234, 236, and 290 each coordinate Fe cation. Arginine 300 is an active-site residue.

This sequence belongs to the iron/ascorbate-dependent oxidoreductase family. GA20OX subfamily. The cofactor is Fe(2+). L-ascorbate serves as cofactor. As to expression, preferentially expressed in reproductive organs. Expressed in the epithelium of embryos and the tapetum of anthers. Expressed at low levels in the shoot apical meristem.

It carries out the reaction gibberellin A12 + 2 2-oxoglutarate + 3 O2 + H(+) = gibberellin A9 + 2 succinate + 3 CO2 + 2 H2O. The enzyme catalyses gibberellin A53 + 2 2-oxoglutarate + 3 O2 + H(+) = gibberellin A20 + 2 succinate + 3 CO2 + 2 H2O. Functionally, key oxidase enzyme in the biosynthesis of gibberellin. Catalyzes the conversion of GA12 and GA53 to GA9 and GA20 respectively, via a three-step oxidation at C-20 of the GA skeleton. The polypeptide is Gibberellin 20 oxidase 1 (Oryza sativa subsp. japonica (Rice)).